Reading from the N-terminus, the 329-residue chain is Putative methylthioribose-1-phosphate isomerase (329 aa).

Substrate-binding positions include 50–52, R84, and Q182; that span reads RGA. D223 serves as the catalytic Proton donor. 233–234 contributes to the substrate binding site; sequence NK.

Belongs to the eIF-2B alpha/beta/delta subunits family. MtnA subfamily.

It carries out the reaction 5-(methylsulfanyl)-alpha-D-ribose 1-phosphate = 5-(methylsulfanyl)-D-ribulose 1-phosphate. Functionally, catalyzes the interconversion of methylthioribose-1-phosphate (MTR-1-P) into methylthioribulose-1-phosphate (MTRu-1-P). The chain is Putative methylthioribose-1-phosphate isomerase from Methanocaldococcus jannaschii (strain ATCC 43067 / DSM 2661 / JAL-1 / JCM 10045 / NBRC 100440) (Methanococcus jannaschii).